The chain runs to 339 residues: Phenylalanine--tRNA ligase alpha subunit (339 aa).

A Mg(2+)-binding site is contributed by glutamate 254.

This sequence belongs to the class-II aminoacyl-tRNA synthetase family. Phe-tRNA synthetase alpha subunit type 1 subfamily. In terms of assembly, tetramer of two alpha and two beta subunits. It depends on Mg(2+) as a cofactor.

Its subcellular location is the cytoplasm. It carries out the reaction tRNA(Phe) + L-phenylalanine + ATP = L-phenylalanyl-tRNA(Phe) + AMP + diphosphate + H(+). The sequence is that of Phenylalanine--tRNA ligase alpha subunit from Alkaliphilus oremlandii (strain OhILAs) (Clostridium oremlandii (strain OhILAs)).